Reading from the N-terminus, the 475-residue chain is UDP-N-acetylmuramate--L-alanine ligase (475 aa).

Residue 117 to 123 (GTHGKTT) participates in ATP binding.

It belongs to the MurCDEF family.

It is found in the cytoplasm. It catalyses the reaction UDP-N-acetyl-alpha-D-muramate + L-alanine + ATP = UDP-N-acetyl-alpha-D-muramoyl-L-alanine + ADP + phosphate + H(+). Its pathway is cell wall biogenesis; peptidoglycan biosynthesis. Its function is as follows. Cell wall formation. The protein is UDP-N-acetylmuramate--L-alanine ligase of Chlorobaculum tepidum (strain ATCC 49652 / DSM 12025 / NBRC 103806 / TLS) (Chlorobium tepidum).